The sequence spans 91 residues: Uteroglobin (91 aa).

Positions 1–21 (MKLTIAIVLVTLTLFCRPAST) are cleaved as a signal peptide.

Belongs to the secretoglobin family. Antiparallel homodimer; disulfide-linked. Interaction with LMBR1L is controversial.

The protein localises to the secreted. Functionally, binds phosphatidylcholine, phosphatidylinositol, polychlorinated biphenyls (PCB) and weakly progesterone, potent inhibitor of phospholipase A2. The polypeptide is Uteroglobin (SCGB1A1) (Bos taurus (Bovine)).